Here is a 547-residue protein sequence, read N- to C-terminus: Vacuolar fusion protein MON1 homolog B (547 aa).

Position 1 is an N-acetylmethionine (methionine 1). The tract at residues 1-106 is disordered; the sequence is MEAGGDTAAP…GGDPSDEEWR (106 aa). The segment covering 57–66 has biased composition (pro residues); it reads PPSPSPPPQS. Residues serine 59 and serine 61 each carry the phosphoserine modification.

It belongs to the MON1/SAND family. In terms of assembly, interacts with CCNT2; down-regulates CCNT2-mediated activation of viral promoters during herpes simplex virus 1/HHV-1 infection. Found in a complex with RMC1, CCZ1 MON1A and MON1B.

This chain is Vacuolar fusion protein MON1 homolog B (MON1B), found in Macaca fascicularis (Crab-eating macaque).